The sequence spans 289 residues: MLKIGIIPNEDKDEELKYTRILVDSIKKCGGTAIVCDDIALKLGDKESNINEDNIVDMSDVMVCLGGDGTFLKAARMTVVKGKPLLGVNLGKLGFLADVDKNDIENAVKRLVEDKFTVDERMMLDTVIVRDGKIIAEDIVLNDVVISRGAISRILHLKTYINDAFMDLYPGDGLIISTPTGSTAYSLSAGGPLVEPDVDLIICTPICPHLLYSRSFITTADRVIKVVVAESSSHEAMVTVDGQNGYEVRGGDVIITKKSRIRMPMVRLNGKNFFDVLRGKIYDRGESMK.

The active-site Proton acceptor is the Asp68. NAD(+) is bound by residues Asp68 to Gly69, Lys73, Asn142 to Asp143, Arg153, Asp172, Thr183 to Ser188, and Gln243.

Belongs to the NAD kinase family. Requires a divalent metal cation as cofactor.

The protein resides in the cytoplasm. The enzyme catalyses NAD(+) + ATP = ADP + NADP(+) + H(+). In terms of biological role, involved in the regulation of the intracellular balance of NAD and NADP, and is a key enzyme in the biosynthesis of NADP. Catalyzes specifically the phosphorylation on 2'-hydroxyl of the adenosine moiety of NAD to yield NADP. The chain is NAD kinase from Acetivibrio thermocellus (strain ATCC 27405 / DSM 1237 / JCM 9322 / NBRC 103400 / NCIMB 10682 / NRRL B-4536 / VPI 7372) (Clostridium thermocellum).